The primary structure comprises 464 residues: Adenylyltransferase and sulfurtransferase MOCS3 (464 aa).

ATP contacts are provided by residues glycine 101, aspartate 122, asparagine 129–arginine 133, lysine 146, and aspartate 190–asparagine 191. Zn(2+) contacts are provided by cysteine 231 and cysteine 234. The Glycyl thioester intermediate; for adenylyltransferase activity role is filled by cysteine 248. Zn(2+) is bound by residues cysteine 306 and cysteine 309. The 105-residue stretch at lysine 358 to proline 462 folds into the Rhodanese domain. The active-site Cysteine persulfide intermediate; for sulfurtransferase activity is cysteine 422.

The protein in the N-terminal section; belongs to the HesA/MoeB/ThiF family. UBA4 subfamily. The cofactor is Zn(2+).

The protein localises to the cytoplasm. The enzyme catalyses [molybdopterin-synthase sulfur-carrier protein]-C-terminal Gly-Gly + ATP + H(+) = [molybdopterin-synthase sulfur-carrier protein]-C-terminal Gly-Gly-AMP + diphosphate. The catalysed reaction is [molybdopterin-synthase sulfur-carrier protein]-C-terminal Gly-Gly-AMP + S-sulfanyl-L-cysteinyl-[cysteine desulfurase] + AH2 = [molybdopterin-synthase sulfur-carrier protein]-C-terminal-Gly-aminoethanethioate + L-cysteinyl-[cysteine desulfurase] + A + AMP + 2 H(+). Its pathway is tRNA modification; 5-methoxycarbonylmethyl-2-thiouridine-tRNA biosynthesis. It participates in cofactor biosynthesis; molybdopterin biosynthesis. Functionally, plays a central role in 2-thiolation of mcm(5)S(2)U at tRNA wobble positions of cytosolic tRNA(Lys), tRNA(Glu) and tRNA(Gln). Also essential during biosynthesis of the molybdenum cofactor. Acts by mediating the C-terminal thiocarboxylation of sulfur carriers URM1 and MOCS2A. Its N-terminus first activates URM1 and MOCS2A as acyl-adenylates (-COAMP), then the persulfide sulfur on the catalytic cysteine is transferred to URM1 and MOCS2A to form thiocarboxylation (-COSH) of their C-terminus. The reaction probably involves hydrogen sulfide that is generated from the persulfide intermediate and that acts as a nucleophile towards URM1 and MOCS2A. Subsequently, a transient disulfide bond is formed. Does not use thiosulfate as sulfur donor; NFS1 probably acting as a sulfur donor for thiocarboxylation reactions. The sequence is that of Adenylyltransferase and sulfurtransferase MOCS3 from Arabidopsis thaliana (Mouse-ear cress).